The sequence spans 563 residues: Arginine--tRNA ligase (563 aa).

A 'HIGH' region motif is present at residues 121–131 (PNIAKPFSIGH).

This sequence belongs to the class-I aminoacyl-tRNA synthetase family. In terms of assembly, monomer.

Its subcellular location is the cytoplasm. The enzyme catalyses tRNA(Arg) + L-arginine + ATP = L-arginyl-tRNA(Arg) + AMP + diphosphate. This chain is Arginine--tRNA ligase, found in Streptococcus thermophilus (strain CNRZ 1066).